Consider the following 342-residue polypeptide: N-alpha-acetyl-L-2,4-diaminobutyric acid deacetylase (342 aa).

Residues 103-124 are disordered; sequence TAGRRTSPMDGGNLNRSFPGDP.

This sequence belongs to the DoeB deacetylase family. Zn(2+) serves as cofactor.

Its subcellular location is the cytoplasm. It carries out the reaction (2S)-2-acetamido-4-aminobutanoate + H2O = L-2,4-diaminobutanoate + acetate. Its function is as follows. Involved in the degradation of ectoine, which allows H.elongata to utilize ectoine as both a carbon and a nitrogen source for growth. Catalyzes the deacetylation of N-alpha-acetyl-L-2,4-diaminobutyrate (N-alpha-Ac-DABA) to yield L-2,4-diaminobutyrate (DABA). In Halomonas elongata (strain ATCC 33173 / DSM 2581 / NBRC 15536 / NCIMB 2198 / 1H9), this protein is N-alpha-acetyl-L-2,4-diaminobutyric acid deacetylase.